The primary structure comprises 625 residues: Replication protein E1 (625 aa).

A Nuclear localization signal motif is present at residues 83-85; it reads KRK. 3 positions are modified to phosphoserine; by host: Ser89, Ser93, and Ser107. A Nuclear export signal motif is present at residues 106 to 115; that stretch reads LSPRLNEISL. The interval 147 to 169 is disordered; it reads GGGGQDVQAGGKENTRPDDGGGD. Residues 162-328 form a DNA-binding region region; the sequence is RPDDGGGDAT…QTMFQHGLED (167 aa). One can recognise an SF3 helicase domain in the interval 427 to 577; the sequence is VEFIAFLAAL…FPFDQNGNPV (151 aa). 453–460 lines the ATP pocket; sequence GPPNTGKS. Lys534 participates in a covalent cross-link: Glycyl lysine isopeptide (Lys-Gly) (interchain with G-Cter in SUMO).

The protein belongs to the papillomaviridae E1 protein family. In terms of assembly, can form hexamers. Interacts with E2 protein; this interaction increases E1 DNA binding specificity. Interacts with host DNA polymerase subunit POLA2. Interacts with host single stranded DNA-binding protein RPA1. Interacts with host TOP1; this interaction stimulates the enzymatic activity of TOP1. Post-translationally, phosphorylated. Sumoylated.

Its subcellular location is the host nucleus. It catalyses the reaction Couples ATP hydrolysis with the unwinding of duplex DNA by translocating in the 3'-5' direction.. It carries out the reaction ATP + H2O = ADP + phosphate + H(+). In terms of biological role, ATP-dependent DNA 3'-5' helicase required for initiation of viral DNA replication. It forms a complex with the viral E2 protein. The E1-E2 complex binds to the replication origin which contains binding sites for both proteins. During the initial step, a dimer of E1 interacts with a dimer of protein E2 leading to a complex that binds the viral origin of replication with high specificity. Then, a second dimer of E1 displaces the E2 dimer in an ATP-dependent manner to form the E1 tetramer. Following this, two E1 monomers are added to each half of the site, which results in the formation of two E1 trimers on the viral ori. Subsequently, two hexamers will be created. The double hexamer acts as a bi-directional helicase machinery and unwinds the viral DNA and then recruits the host DNA polymerase to start replication. The sequence is that of Replication protein E1 from Macaca mulatta (Rhesus macaque).